The following is a 113-amino-acid chain: uncharacterized protein (113 aa).

A signal peptide spans 1-16 (MKCLVVLTALFGISTA). Over residues 81 to 101 (GGNGGNGGGGNGGNNGNGNGN) the composition is skewed to gly residues. Residues 81 to 103 (GGNGGNGGGGNGGNNGNGNGNNG) are disordered.

In terms of tissue distribution, nacreous layer of shell (at protein level).

It is found in the secreted. This is an uncharacterized protein from Margaritifera margaritifera (Freshwater pearl mussel).